Reading from the N-terminus, the 223-residue chain is 3,4-dihydroxy-2-butanone 4-phosphate synthase (223 aa).

D-ribulose 5-phosphate contacts are provided by residues 39 to 40 (RE), Asp44, 152 to 156 (RRGHT), and Glu176. Glu40 contributes to the Mg(2+) binding site. Residue His155 participates in Mg(2+) binding.

It belongs to the DHBP synthase family. As to quaternary structure, homodimer. It depends on Mg(2+) as a cofactor. Mn(2+) is required as a cofactor.

It carries out the reaction D-ribulose 5-phosphate = (2S)-2-hydroxy-3-oxobutyl phosphate + formate + H(+). Its pathway is cofactor biosynthesis; riboflavin biosynthesis; 2-hydroxy-3-oxobutyl phosphate from D-ribulose 5-phosphate: step 1/1. In terms of biological role, catalyzes the conversion of D-ribulose 5-phosphate to formate and 3,4-dihydroxy-2-butanone 4-phosphate. In Desulfovibrio desulfuricans (strain ATCC 27774 / DSM 6949 / MB), this protein is 3,4-dihydroxy-2-butanone 4-phosphate synthase.